We begin with the raw amino-acid sequence, 160 residues long: Transcription antitermination protein NusB (160 aa).

The protein belongs to the NusB family.

Involved in transcription antitermination. Required for transcription of ribosomal RNA (rRNA) genes. Binds specifically to the boxA antiterminator sequence of the ribosomal RNA (rrn) operons. This is Transcription antitermination protein NusB from Rhizobium leguminosarum bv. trifolii (strain WSM2304).